The chain runs to 899 residues: Translation initiation factor IF-2 (899 aa).

3 disordered regions span residues 115–137 (EAKARAEQQAREAAEQKARLQTE), 170–189 (RGGGTVKPAPKPAETLEQKK), and 262–309 (DREI…HGFE). The 170-residue stretch at 399–568 (TRPPVVTIMG…LIQSELMELK (170 aa)) folds into the tr-type G domain. The tract at residues 408-415 (GHVDHGKT) is G1. 408–415 (GHVDHGKT) contributes to the GTP binding site. Residues 433–437 (GITQH) form a G2 region. The segment at 454–457 (DTPG) is G3. Residues 454-458 (DTPGH) and 508-511 (NKMD) contribute to the GTP site. The G4 stretch occupies residues 508 to 511 (NKMD). The tract at residues 544–546 (SAH) is G5.

The protein belongs to the TRAFAC class translation factor GTPase superfamily. Classic translation factor GTPase family. IF-2 subfamily.

The protein resides in the cytoplasm. Its function is as follows. One of the essential components for the initiation of protein synthesis. Protects formylmethionyl-tRNA from spontaneous hydrolysis and promotes its binding to the 30S ribosomal subunits. Also involved in the hydrolysis of GTP during the formation of the 70S ribosomal complex. The protein is Translation initiation factor IF-2 of Acinetobacter baumannii (strain SDF).